The chain runs to 378 residues: Probable methyltransferase At1g29790 (378 aa).

Residues 1–6 lie on the Cytoplasmic side of the membrane; it reads MAGFTM. Residues 7–29 form a helical; Signal-anchor for type II membrane protein membrane-spanning segment; it reads SLNLLLLVAMVATNILSLYHLSS. Topologically, residues 30–378 are lumenal; that stretch reads TTNFFQSTVK…TALLQKPVAR (349 aa). Residues 67 to 87 are disordered; the sequence is TTHQPDKSTSTSTSRAAVSSS. Over residues 74–87 the composition is skewed to low complexity; sequence STSTSTSRAAVSSS. An N-linked (GlcNAc...) asparagine glycan is attached at Asn-247.

It belongs to the methyltransferase superfamily.

It localises to the golgi apparatus membrane. The sequence is that of Probable methyltransferase At1g29790 from Arabidopsis thaliana (Mouse-ear cress).